The chain runs to 81 residues: Cytochrome b559 subunit alpha (81 aa).

A helical transmembrane segment spans residues 21-35; the sequence is IIHSITIPMLFIAGW. Heme is bound at residue His-23.

Belongs to the PsbE/PsbF family. Heterodimer of an alpha subunit and a beta subunit. PSII is composed of 1 copy each of membrane proteins PsbA, PsbB, PsbC, PsbD, PsbE, PsbF, PsbH, PsbI, PsbJ, PsbK, PsbL, PsbM, PsbT, PsbX, PsbY, PsbZ, Psb30/Ycf12, peripheral proteins PsbO, CyanoQ (PsbQ), PsbU, PsbV and a large number of cofactors. It forms dimeric complexes. Requires heme b as cofactor.

The protein resides in the cellular thylakoid membrane. This b-type cytochrome is tightly associated with the reaction center of photosystem II (PSII). PSII is a light-driven water:plastoquinone oxidoreductase that uses light energy to abstract electrons from H(2)O, generating O(2) and a proton gradient subsequently used for ATP formation. It consists of a core antenna complex that captures photons, and an electron transfer chain that converts photonic excitation into a charge separation. The polypeptide is Cytochrome b559 subunit alpha (Microcystis aeruginosa (strain NIES-843 / IAM M-2473)).